A 249-amino-acid chain; its full sequence is ATP synthase subunit a, chloroplastic (249 aa).

5 consecutive transmembrane segments (helical) span residues 40 to 60, 97 to 117, 136 to 156, 201 to 221, and 222 to 242; these read QVLI…VLVV, VPFI…GALL, INTT…AGLS, LVVV…VMFL, and GLFT…AYIG.

The protein belongs to the ATPase A chain family. As to quaternary structure, F-type ATPases have 2 components, CF(1) - the catalytic core - and CF(0) - the membrane proton channel. CF(1) has five subunits: alpha(3), beta(3), gamma(1), delta(1), epsilon(1). CF(0) has four main subunits: a, b, b' and c.

The protein localises to the plastid. The protein resides in the chloroplast thylakoid membrane. Its function is as follows. Key component of the proton channel; it plays a direct role in the translocation of protons across the membrane. The polypeptide is ATP synthase subunit a, chloroplastic (Aethionema grandiflorum (Persian stone-cress)).